Reading from the N-terminus, the 639-residue chain is Threonine--tRNA ligase (639 aa).

In terms of domain architecture, TGS spans 1-61; the sequence is MIHITLPDGS…TADCRLSIIT (61 aa). The tract at residues 242–533 is catalytic; that stretch reads DHRKLGRELD…LLEQHAGALP (292 aa). Zn(2+) contacts are provided by cysteine 333, histidine 384, and histidine 510.

Belongs to the class-II aminoacyl-tRNA synthetase family. Homodimer. It depends on Zn(2+) as a cofactor.

Its subcellular location is the cytoplasm. It catalyses the reaction tRNA(Thr) + L-threonine + ATP = L-threonyl-tRNA(Thr) + AMP + diphosphate + H(+). Catalyzes the attachment of threonine to tRNA(Thr) in a two-step reaction: L-threonine is first activated by ATP to form Thr-AMP and then transferred to the acceptor end of tRNA(Thr). Also edits incorrectly charged L-seryl-tRNA(Thr). This Verminephrobacter eiseniae (strain EF01-2) protein is Threonine--tRNA ligase.